Reading from the N-terminus, the 226-residue chain is 2-C-methyl-D-erythritol 4-phosphate cytidylyltransferase (226 aa).

The protein belongs to the IspD/TarI cytidylyltransferase family. IspD subfamily.

It carries out the reaction 2-C-methyl-D-erythritol 4-phosphate + CTP + H(+) = 4-CDP-2-C-methyl-D-erythritol + diphosphate. Its pathway is isoprenoid biosynthesis; isopentenyl diphosphate biosynthesis via DXP pathway; isopentenyl diphosphate from 1-deoxy-D-xylulose 5-phosphate: step 2/6. Catalyzes the formation of 4-diphosphocytidyl-2-C-methyl-D-erythritol from CTP and 2-C-methyl-D-erythritol 4-phosphate (MEP). The protein is 2-C-methyl-D-erythritol 4-phosphate cytidylyltransferase of Trichodesmium erythraeum (strain IMS101).